The primary structure comprises 516 residues: Nucleolar complex protein 4 homolog (516 aa).

Transmembrane regions (helical) follow at residues 297–317 (ACDLGGALSLLALNGLFILIH), 347–367 (FFHLADLFLSSSHLPAYLVAA), and 375–395 (LALTAPPEALLMVLPFICNLL).

Belongs to the CBF/MAK21 family.

It is found in the nucleus membrane. Its subcellular location is the nucleus. It localises to the nucleolus. This is Nucleolar complex protein 4 homolog (NOC4L) from Homo sapiens (Human).